The chain runs to 189 residues: Glucose-6-phosphate isomerase (189 aa).

Residues H88, H90, E97, and H136 each contribute to the Fe cation site.

The protein belongs to the archaeal-type GPI family. Homodimer.

It localises to the cytoplasm. It carries out the reaction alpha-D-glucose 6-phosphate = beta-D-fructose 6-phosphate. It participates in carbohydrate degradation; glycolysis; D-glyceraldehyde 3-phosphate and glycerone phosphate from D-glucose: step 2/4. The sequence is that of Glucose-6-phosphate isomerase from Thermococcus onnurineus (strain NA1).